Here is a 525-residue protein sequence, read N- to C-terminus: DNA damage-binding protein cmr1 (525 aa).

Over residues T34–S50 the composition is skewed to polar residues. Disordered stretches follow at residues T34–K103, D214–P240, and T282–G301. Over residues E83–A102 the composition is skewed to basic and acidic residues. One copy of the WD 1 repeat lies at I182–A223. Over residues E227–D239 the composition is skewed to acidic residues. WD repeat units follow at residues P247–K287, L339–P379, E384–K425, G448–L491, and D494–M525.

The protein belongs to the WD repeat DDB2/WDR76 family.

In terms of biological role, DNA-binding protein that binds to both single- and double-stranded DNA. Binds preferentially to UV-damaged DNA. May be involved in DNA-metabolic processes. This Emericella nidulans (strain FGSC A4 / ATCC 38163 / CBS 112.46 / NRRL 194 / M139) (Aspergillus nidulans) protein is DNA damage-binding protein cmr1.